The sequence spans 266 residues: Phosphoethanolamine N-methyltransferase (266 aa).

Q18 serves as a coordination point for phosphoethanolamine. Residue Y19 is part of the active site. Residue Y27 coordinates phosphoethanolamine. S-adenosyl-L-methionine is bound by residues I36, S37, G63, D85, I86, D110, I111, and R127. H132 is an active-site residue. The phosphoethanolamine site is built by Y160, Y175, R179, Y181, and K247.

The protein belongs to the class I-like SAM-binding methyltransferase superfamily. PEAMT family. In terms of assembly, monomer.

The protein resides in the golgi apparatus membrane. The protein localises to the cytoplasm. It catalyses the reaction phosphoethanolamine + S-adenosyl-L-methionine = N-methylethanolamine phosphate + S-adenosyl-L-homocysteine + H(+). It carries out the reaction N-methylethanolamine phosphate + S-adenosyl-L-methionine = N,N-dimethylethanolamine phosphate + S-adenosyl-L-homocysteine + H(+). The catalysed reaction is N,N-dimethylethanolamine phosphate + S-adenosyl-L-methionine = phosphocholine + S-adenosyl-L-homocysteine + H(+). The protein operates within phospholipid metabolism; phosphatidylcholine biosynthesis; phosphocholine from phosphoethanolamine. Inhibited by phosphocholine. Inhibited by hexadecylphosphocholine (miltefosine). Inhibited by S-adenosyl-l-homocysteine. Weakly inhibited in vitro by amodiaquine, chloroquine and primaquine. Inhibited by NSC-158011. Catalyzes N-methylation of phosphoethanolamine, phosphomonomethylethanolamine and phosphodimethylethanolamine, the three methylation steps required to convert phosphoethanolamine to phosphocholine. Has no ethanolamine- or phosphatidylethanolamine-N-methyltransferase activity. Required for gametocyte development, maturation and transmission to mosquitoes and for oocyst formation in the mosquito midgut. The protein is Phosphoethanolamine N-methyltransferase of Plasmodium falciparum (isolate 3D7).